A 500-amino-acid chain; its full sequence is NAD(P)H-quinone oxidoreductase chain 4, chloroplastic (500 aa).

14 helical membrane-spanning segments follow: residues 4–24 (FPWLTIIVFLPISAGSLLFFL), 31–51 (LIKWYTICICILELLLTTYAF), 87–107 (IGPILLTGFITTLATLAAWPV), 113–130 (LFHFLMLAMYSGQIGSFS), 134–154 (LLLFFIMWEFELIPVYLLLSM), 167–187 (FILYTAGGSVFLLIGVLGLGL), 208–228 (ALEIIFYIGFLIAFAVKSPII), 242–262 (HYSTCMLLAGILLKMGAYGLV), 272–292 (AHSIFSPWLIIVGTMQIIYAA), 305–325 (IAYSSVSHMGFIIIGIGSITD), 330–350 (GAILQIISHGFIGAALFFLAG), 386–406 (LALPGMSGFVAELIVFFGIIT), 416–436 (ILITFVMAIGMILTPIYSLSM), and 462–482 (LFVSISIFLPVIGIGIYPDFV).

It belongs to the complex I subunit 4 family.

Its subcellular location is the plastid. The protein resides in the chloroplast thylakoid membrane. It carries out the reaction a plastoquinone + NADH + (n+1) H(+)(in) = a plastoquinol + NAD(+) + n H(+)(out). It catalyses the reaction a plastoquinone + NADPH + (n+1) H(+)(in) = a plastoquinol + NADP(+) + n H(+)(out). The sequence is that of NAD(P)H-quinone oxidoreductase chain 4, chloroplastic from Gossypium barbadense (Sea Island cotton).